We begin with the raw amino-acid sequence, 103 residues long: Large ribosomal subunit protein bL21 (103 aa).

Belongs to the bacterial ribosomal protein bL21 family. Part of the 50S ribosomal subunit. Contacts protein L20.

Functionally, this protein binds to 23S rRNA in the presence of protein L20. This is Large ribosomal subunit protein bL21 from Azoarcus sp. (strain BH72).